A 333-amino-acid polypeptide reads, in one-letter code: Serine/threonine-protein phosphatase 4 catalytic subunit 1 (333 aa).

Residues 1-29 (MALAVADTQNETFARSESPTSGPSDQLST) are disordered. Residues 7-27 (DTQNETFARSESPTSGPSDQL) show a composition bias toward polar residues. Mn(2+) is bound by residues Asp79, His81, Asp107, and Asn139. The Proton donor role is filled by His140. 2 residues coordinate Mn(2+): His189 and His264. A Leucine methyl ester modification is found at Leu333.

This sequence belongs to the PPP phosphatase family. PP-4 (PP-X) subfamily. As to quaternary structure, serine/threonine-protein phosphatase 4 (PP4) occurs in different assemblies of the catalytic and one or more regulatory subunits. The regulatory subunits are likely to be ppfr-1, ppfr-2, ppfr-4 and smk-1. Interacts with mei-1. Mn(2+) serves as cofactor. Methylation at the C-terminal Leu-333 is critical for interactions with regulatory subunits.

It localises to the cytoplasm. It is found in the cytoskeleton. Its subcellular location is the microtubule organizing center. The protein localises to the centrosome. It catalyses the reaction O-phospho-L-seryl-[protein] + H2O = L-seryl-[protein] + phosphate. The enzyme catalyses O-phospho-L-threonyl-[protein] + H2O = L-threonyl-[protein] + phosphate. Protein phosphatase which plays an essential role in meiosis and in early embryonic mitosis. During spermatocyte meiosis and the first embryonic mitosis, regulates centrosome maturation, and thus spindle formation, by recruiting some of the components of the pericentriolar material (PCM). During oocyte meiosis I, regulates meiotic chromosome dynamics including synapsis-independent chromosome pairing, restriction of synapsis to homologous chromosomes, programmed DNA double-strand break initiation and crossover formation resulting in chiasma formation. During oocyte meiosis II and probably together with regulatory subunit ppfr-1, may regulate microtubule severing by dephosphorylating and activating mei-1, a component of the katanin microtubule severing complex. The sequence is that of Serine/threonine-protein phosphatase 4 catalytic subunit 1 (pph-4.1) from Caenorhabditis briggsae.